Reading from the N-terminus, the 87-residue chain is Small ribosomal subunit protein uS19 (87 aa).

Positions 1-29 are disordered; the sequence is MARSLKKGPFVDHHLQKKVDVQNKEGTKK. Positions 9-28 are enriched in basic and acidic residues; the sequence is PFVDHHLQKKVDVQNKEGTK.

It belongs to the universal ribosomal protein uS19 family.

Protein S19 forms a complex with S13 that binds strongly to the 16S ribosomal RNA. This chain is Small ribosomal subunit protein uS19, found in Protochlamydia amoebophila (strain UWE25).